The chain runs to 663 residues: Cytoplasmic dynein 1 intermediate chain (663 aa).

Residues 17 to 37 show a composition bias toward basic and acidic residues; the sequence is LREEKDRRRREKEIKDMEEAA. Disordered regions lie at residues 17 to 52 and 75 to 107; these read LREE…DQRK and SVNS…KKQP. Over residues 75–85 the composition is skewed to low complexity; that stretch reads SVNSMTSDNSN. Positions 86 to 99 are enriched in polar residues; sequence TQTPDASLQATVNG. 7 WD repeats span residues 311 to 360, 364 to 404, 413 to 454, 463 to 503, 508 to 553, 556 to 596, and 602 to 641; these read SKNR…STPE, HCQS…RTPI, AHTH…QPQD, SKAI…SGVN, RHLG…PLYS, DNSD…EVPT, and AGAP…AQPS.

The protein belongs to the dynein intermediate chain family. In terms of assembly, homodimer. The cytoplasmic dynein 1 complex consists of two catalytic heavy chains (HCs) and a number of non-catalytic subunits presented by intermediate chains (ICs), light intermediate chains (LICs) and light chains (LCs). In terms of tissue distribution, high levels of isoform 1b, isoform 1c, isoform 3a and isoform 4 accumulate in early egg chambers and at stage 9 become concentrated at the posterior of the oocyte. Isoform 5a and isoform 5b are highly expressed in adult head and to a lesser extent in adult torso. Isoform 1a, isoform 2a and isoform 2b are found in all tissues examined, including ovaries, midgut, torso and head.

It is found in the cytoplasm. It localises to the cytoskeleton. Its subcellular location is the lysosome membrane. The protein localises to the nucleus membrane. In terms of biological role, acts as one of several non-catalytic accessory components of the cytoplasmic dynein 1 complex that are thought to be involved in linking dynein to cargos and to adapter proteins that regulate dynein function. Cytoplasmic dynein 1 acts as a motor for the intracellular retrograde motility of vesicles and organelles along microtubules. The intermediate chains mediate the help dynein bind to dynactin 150 kDa component. This is Cytoplasmic dynein 1 intermediate chain (sw) from Drosophila melanogaster (Fruit fly).